A 335-amino-acid chain; its full sequence is Biotin synthase (335 aa).

The region spanning 51-278 (NTVQLSSLLS…LAKVRLSAGR (228 aa)) is the Radical SAM core domain. The [4Fe-4S] cluster site is built by Cys66, Cys70, and Cys73. 4 residues coordinate [2Fe-2S] cluster: Cys110, Cys141, Cys201, and Arg273.

The protein belongs to the radical SAM superfamily. Biotin synthase family. In terms of assembly, homodimer. The cofactor is [4Fe-4S] cluster. [2Fe-2S] cluster serves as cofactor.

It carries out the reaction (4R,5S)-dethiobiotin + (sulfur carrier)-SH + 2 reduced [2Fe-2S]-[ferredoxin] + 2 S-adenosyl-L-methionine = (sulfur carrier)-H + biotin + 2 5'-deoxyadenosine + 2 L-methionine + 2 oxidized [2Fe-2S]-[ferredoxin]. It participates in cofactor biosynthesis; biotin biosynthesis; biotin from 7,8-diaminononanoate: step 2/2. In terms of biological role, catalyzes the conversion of dethiobiotin (DTB) to biotin by the insertion of a sulfur atom into dethiobiotin via a radical-based mechanism. The chain is Biotin synthase from Bordetella bronchiseptica (strain ATCC BAA-588 / NCTC 13252 / RB50) (Alcaligenes bronchisepticus).